A 709-amino-acid polypeptide reads, in one-letter code: Zinc finger CCHC domain-containing protein 8 (709 aa).

The segment at 1-47 (MAAGVDFGDLELFEAFDPPEESTPKPVHTRFKDDEEEEDDDDDENGV) is disordered. Residue Ala-2 is modified to N-acetylalanine. Acidic residues-rich tracts occupy residues 8–20 (GDLE…DPPE) and 34–46 (DEEE…DENG). Positions 48–83 (GDAELQEQLRRCEATIEQLRAENQELKRKLNILTRP) form a coiled coil. The CCHC-type zinc-finger motif lies at 230–247 (PHCFNCGSEEHQMKECPM). 2 RBM7 binding regions span residues 289–302 (FKPG…QDAL) and 312–327 (FIYR…GWLK). 2 disordered regions span residues 409–518 (IQSP…EDAL) and 533–667 (ALQQ…DMSK). Positions 410–430 (QSPSMRSSGKRSSSQSSPNSP) are enriched in low complexity. Over residues 468–499 (PPLPPGTPPPLPQGTPPPLFTPPLPKGTPPLT) the composition is skewed to pro residues. Residues Thr-474, Thr-482, Thr-488, and Thr-495 each carry the phosphothreonine modification. Residues 552–562 (LTGNSVASSPC) show a composition bias toward polar residues. Ser-601 carries the phosphoserine modification. Residues 635-645 (MNMSNGSNQQP) are compositionally biased toward polar residues. Residues Ser-660 and Ser-697 each carry the phosphoserine modification. The MTREX binding stretch occupies residues 661–709 (PVPDMSKFATGITPFEFENMAESTGMYLRIRNLLKNSPRNQQKNKKTCE).

It belongs to the ZCCHC8 family. Component of a nuclear TRAMP-like complex, an ATP-dependent exosome regulatory complex consisting of a helicase (MTREX), an oligadenylate polymerase (TENT4B or TENT4A), and a substrate specific RNA-binding factor (ZCCHC7 or ZCCHC8). Several TRAMP-like complexes exist with specific compositions and are associated with nuclear, or nucleolar RNA exosomes. Identified in the spliceosome C complex. Component of the nuclear exosome targeting (NEXT) complex composed of MTREX, ZCCHC8, and RBM7 that directs a subset of non-coding short-lived RNAs for exosomal degradation. Interacts with proteins involved in RNA processing and degradation such as MTREX and RBM7; interaction with MTREX enhances MTREX RNA helicase activity and bridges between RBM7 and MTREX. Interacts with TERC, the telomerase RNA component. In terms of processing, phosphorylation at Thr-495 by GSK3 is triggered in cells entering mitosis.

Its subcellular location is the nucleus. The protein resides in the nucleoplasm. Functionally, scaffolding subunit of the trimeric nuclear exosome targeting (NEXT) complex that is involved in the surveillance and turnover of aberrant transcripts and non-coding RNAs. NEXT functions as an RNA exosome cofactor that directs a subset of non-coding short-lived RNAs for exosomal degradation. May be involved in pre-mRNA splicing. It is required for 3'-end maturation of telomerase RNA component (TERC), TERC 3'-end targeting to the nuclear RNA exosome, and for telomerase function. The protein is Zinc finger CCHC domain-containing protein 8 (Zcchc8) of Mus musculus (Mouse).